A 465-amino-acid chain; its full sequence is SHC-transforming protein 1 (465 aa).

Residues 44 to 227 (MGPGVPYLVR…AGFDGSAWDE (184 aa)) enclose the PID domain. Residues 228 to 369 (EEEELPDHAY…SMEDQLKREP (142 aa)) are CH1. Residues 281 to 315 (VSGAEQDSRKMQPTLQGRERFPVPCSRPPNRPDLF) are disordered. Residues 370-461 (WYQGKMSRKE…GSELCLQQPV (92 aa)) enclose the SH2 domain.

As to quaternary structure, interacts with grb2. Highly expressed in oocytes and embryo. Also expressed in liver. Detected in ovary, testis and heart and to a lesser extent in liver (at protein level).

Its subcellular location is the cytoplasm. Functionally, implicated in ras-dependent oocyte maturation induced by insulin/IGF1. The chain is SHC-transforming protein 1 (shc1) from Xenopus laevis (African clawed frog).